The primary structure comprises 95 residues: UPF0235 protein Sama_2480 (95 aa).

It belongs to the UPF0235 family.

This Shewanella amazonensis (strain ATCC BAA-1098 / SB2B) protein is UPF0235 protein Sama_2480.